The following is a 108-amino-acid chain: Thioredoxin (108 aa).

Residues serine 2–leucine 108 enclose the Thioredoxin domain. Cysteine 33 and cysteine 36 are oxidised to a cystine.

It belongs to the thioredoxin family.

Functionally, component of the thioredoxin-thioredoxin reductase system. Participates in various redox reactions through the reversible oxidation of its active center dithiol to a disulfide and catalyzes dithiol-disulfide exchange reactions. This Acidithiobacillus ferridurans protein is Thioredoxin (trxA).